A 21-amino-acid polypeptide reads, in one-letter code: Ocellatin-4 (21 aa).

Ile21 carries the post-translational modification Isoleucine amide.

Expressed by the skin dorsal glands.

The protein resides in the secreted. In terms of biological role, has hemolytic activity against human erythrocytes (HC50=14.3 uM). Has antibacterial activity against the Gram-positive bacterium S.aureus ATCC 25923 (MIC=64 uM) and the Gram-negative bacterium E.coli ATCC 25922 (MIC=64 uM). The chain is Ocellatin-4 from Leptodactylus ocellatus (Argus frog).